Reading from the N-terminus, the 83-residue chain is Urotensin-2 (83 aa).

A propeptide spanning residues 49–71 (EVLLEKQSLLNPFSRVFGIRKQF) is cleaved from the precursor. Cys-77 and Cys-82 are disulfide-bonded.

It belongs to the urotensin-2 family.

The protein resides in the secreted. Its function is as follows. Urotensin is found in the teleost caudal neurosecretory system. It has a suggested role in osmoregulation and as a corticotropin-releasing factor. The non-hormonal portion of this precursor may be a urotensin binding protein, urophysin. The polypeptide is Urotensin-2 (Platichthys flesus (European flounder)).